Consider the following 337-residue polypeptide: Beta-hexosaminidase (337 aa).

Substrate-binding positions include Asp62, Arg70, Arg133, and 163–164 (KH). Residue His176 is the Proton donor/acceptor of the active site. Asp248 functions as the Nucleophile in the catalytic mechanism.

It belongs to the glycosyl hydrolase 3 family. NagZ subfamily.

The protein localises to the cytoplasm. The catalysed reaction is Hydrolysis of terminal non-reducing N-acetyl-D-hexosamine residues in N-acetyl-beta-D-hexosaminides.. It functions in the pathway cell wall biogenesis; peptidoglycan recycling. In terms of biological role, plays a role in peptidoglycan recycling by cleaving the terminal beta-1,4-linked N-acetylglucosamine (GlcNAc) from peptide-linked peptidoglycan fragments, giving rise to free GlcNAc, anhydro-N-acetylmuramic acid and anhydro-N-acetylmuramic acid-linked peptides. The sequence is that of Beta-hexosaminidase from Psychromonas ingrahamii (strain DSM 17664 / CCUG 51855 / 37).